Reading from the N-terminus, the 320-residue chain is ATP-dependent 6-phosphofructokinase (320 aa).

G12 contacts ATP. Residues 22 to 26 (RGVVR) and 55 to 60 (RYSVSD) each bind ADP. Residues 73-74 (RF) and 103-106 (GDGS) contribute to the ATP site. A Mg(2+)-binding site is contributed by D104. 126–128 (TID) serves as a coordination point for substrate. D128 acts as the Proton acceptor in catalysis. R155 contributes to the ADP binding site. Residues R163 and 170–172 (MGR) each bind substrate. Residues 186 to 188 (GCE), K212, and 214 to 216 (KKH) each bind ADP. Substrate is bound by residues E223, R244, and 250–253 (HIQR).

This sequence belongs to the phosphofructokinase type A (PFKA) family. ATP-dependent PFK group I subfamily. Prokaryotic clade 'B1' sub-subfamily. In terms of assembly, homotetramer. Mg(2+) serves as cofactor.

Its subcellular location is the cytoplasm. It catalyses the reaction beta-D-fructose 6-phosphate + ATP = beta-D-fructose 1,6-bisphosphate + ADP + H(+). The protein operates within carbohydrate degradation; glycolysis; D-glyceraldehyde 3-phosphate and glycerone phosphate from D-glucose: step 3/4. Its activity is regulated as follows. Allosterically activated by ADP and other diphosphonucleosides, and allosterically inhibited by phosphoenolpyruvate. Catalyzes the phosphorylation of D-fructose 6-phosphate to fructose 1,6-bisphosphate by ATP, the first committing step of glycolysis. This chain is ATP-dependent 6-phosphofructokinase, found in Klebsiella pneumoniae (strain 342).